Consider the following 541-residue polypeptide: Light-independent protochlorophyllide reductase subunit B (541 aa).

Asp-36 is a binding site for [4Fe-4S] cluster. Asp-290 serves as the catalytic Proton donor. A substrate-binding site is contributed by 425–426 (GL).

The protein belongs to the ChlB/BchB/BchZ family. Protochlorophyllide reductase is composed of three subunits; ChlL, ChlN and ChlB. Forms a heterotetramer of two ChlB and two ChlN subunits. Requires [4Fe-4S] cluster as cofactor.

It carries out the reaction chlorophyllide a + oxidized 2[4Fe-4S]-[ferredoxin] + 2 ADP + 2 phosphate = protochlorophyllide a + reduced 2[4Fe-4S]-[ferredoxin] + 2 ATP + 2 H2O. Its pathway is porphyrin-containing compound metabolism; chlorophyll biosynthesis (light-independent). Functionally, component of the dark-operative protochlorophyllide reductase (DPOR) that uses Mg-ATP and reduced ferredoxin to reduce ring D of protochlorophyllide (Pchlide) to form chlorophyllide a (Chlide). This reaction is light-independent. The NB-protein (ChlN-ChlB) is the catalytic component of the complex. This chain is Light-independent protochlorophyllide reductase subunit B, found in Synechococcus sp. (strain CC9902).